The primary structure comprises 365 residues: Pyridoxal reductase, chloroplastic (365 aa).

Residues 1 to 15 (MALTLSTTKTFTNIN) constitute a chloroplast transit peptide. Tyrosine 94 serves as the catalytic Proton donor.

It belongs to the aldo/keto reductase family. Monomer. As to expression, expressed in cotyledons, embryos, flowers, shoots, roots and seeds.

Its subcellular location is the plastid. The protein localises to the chloroplast. The enzyme catalyses pyridoxine + NADP(+) = pyridoxal + NADPH + H(+). It participates in cofactor degradation; B6 vitamer degradation; pyridoxal from pyridoxine (dehydrogenase route): step 1/1. In terms of biological role, catalyzes the reduction of pyridoxal (PL) with NADPH and oxidation of pyridoxine (PN) with NADP(+). Involved in the PLP salvage pathway. The chain is Pyridoxal reductase, chloroplastic (PLR1) from Arabidopsis thaliana (Mouse-ear cress).